The sequence spans 277 residues: ATP synthase subunit a (277 aa).

5 helical membrane-spanning segments follow: residues 40–60, 98–118, 154–174, 219–239, and 245–265; these read AWHV…LIIF, SALI…MNLM, DLNL…FYSI, LFGN…IGYF, and FMWA…FMML.

The protein belongs to the ATPase A chain family. F-type ATPases have 2 components, CF(1) - the catalytic core - and CF(0) - the membrane proton channel. CF(1) has five subunits: alpha(3), beta(3), gamma(1), delta(1), epsilon(1). CF(0) has three main subunits: a(1), b(2) and c(9-12). The alpha and beta chains form an alternating ring which encloses part of the gamma chain. CF(1) is attached to CF(0) by a central stalk formed by the gamma and epsilon chains, while a peripheral stalk is formed by the delta and b chains.

It is found in the cell inner membrane. Its function is as follows. Key component of the proton channel; it plays a direct role in the translocation of protons across the membrane. The protein is ATP synthase subunit a of Alteromonas mediterranea (strain DSM 17117 / CIP 110805 / LMG 28347 / Deep ecotype).